Consider the following 474-residue polypeptide: Aromatic amino acid aminotransferase C56E4.03 (474 aa).

It belongs to the class-I pyridoxal-phosphate-dependent aminotransferase family. Pyridoxal 5'-phosphate is required as a cofactor.

Its subcellular location is the cytoplasm. The enzyme catalyses an aromatic L-alpha-amino acid + 2-oxoglutarate = an aromatic oxo-acid + L-glutamate. Functionally, has aromatic amino acid transaminase activity. The chain is Aromatic amino acid aminotransferase C56E4.03 from Schizosaccharomyces pombe (strain 972 / ATCC 24843) (Fission yeast).